Consider the following 585-residue polypeptide: Serine/threonine-protein kinase Nek3 (585 aa).

A Protein kinase domain is found at 4-258 (YEVLEQIGKG…AAELLKHPHL (255 aa)). Residues 10–18 (IGKGSFGSA) and lysine 33 each bind ATP. Aspartate 129 (proton acceptor) is an active-site residue. Disordered stretches follow at residues 354-413 (GNHS…TPVN) and 489-511 (DSSKNHTGDSSDPSILGTDSNPL). Polar residues-rich tracts occupy residues 400-413 (RASQPTRRASTPVN) and 498-511 (SSDPSILGTDSNPL).

This sequence belongs to the protein kinase superfamily. NEK Ser/Thr protein kinase family. NIMA subfamily. As to quaternary structure, interacts with PLIM2B. Expressed in pollen grains.

It carries out the reaction L-seryl-[protein] + ATP = O-phospho-L-seryl-[protein] + ADP + H(+). The catalysed reaction is L-threonyl-[protein] + ATP = O-phospho-L-threonyl-[protein] + ADP + H(+). Functionally, may be involved in plant development processes. May function downstream of DCW11 in retrograde signaling from the mitochondria to the nucleus. Seems to be involved in the mechanism of cytoplasmic male sterility (CMS) occurrence. The chain is Serine/threonine-protein kinase Nek3 from Oryza sativa subsp. japonica (Rice).